The following is a 444-amino-acid chain: 23S rRNA (uracil(1939)-C(5))-methyltransferase RlmD (444 aa).

One can recognise a TRAM domain in the interval K5–S64. Positions 77, 83, 86, and 166 each coordinate [4Fe-4S] cluster. Positions 276, 305, 310, 326, 353, and 374 each coordinate S-adenosyl-L-methionine. C400 (nucleophile) is an active-site residue.

The protein belongs to the class I-like SAM-binding methyltransferase superfamily. RNA M5U methyltransferase family. RlmD subfamily.

It catalyses the reaction uridine(1939) in 23S rRNA + S-adenosyl-L-methionine = 5-methyluridine(1939) in 23S rRNA + S-adenosyl-L-homocysteine + H(+). In terms of biological role, catalyzes the formation of 5-methyl-uridine at position 1939 (m5U1939) in 23S rRNA. The protein is 23S rRNA (uracil(1939)-C(5))-methyltransferase RlmD of Legionella pneumophila (strain Lens).